A 273-amino-acid chain; its full sequence is 2-dehydro-3-deoxyphosphooctonate aldolase (273 aa).

Belongs to the KdsA family.

Its subcellular location is the cytoplasm. The enzyme catalyses D-arabinose 5-phosphate + phosphoenolpyruvate + H2O = 3-deoxy-alpha-D-manno-2-octulosonate-8-phosphate + phosphate. It functions in the pathway carbohydrate biosynthesis; 3-deoxy-D-manno-octulosonate biosynthesis; 3-deoxy-D-manno-octulosonate from D-ribulose 5-phosphate: step 2/3. It participates in bacterial outer membrane biogenesis; lipopolysaccharide biosynthesis. This chain is 2-dehydro-3-deoxyphosphooctonate aldolase, found in Geobacter sp. (strain M21).